The chain runs to 470 residues: Uronate isomerase (470 aa).

It belongs to the metallo-dependent hydrolases superfamily. Uronate isomerase family.

The enzyme catalyses D-glucuronate = D-fructuronate. It catalyses the reaction aldehydo-D-galacturonate = keto-D-tagaturonate. It participates in carbohydrate metabolism; pentose and glucuronate interconversion. The sequence is that of Uronate isomerase from Salmonella newport (strain SL254).